The primary structure comprises 260 residues: Ribose-5-phosphate isomerase (260 aa).

The protein belongs to the ribose 5-phosphate isomerase family.

It localises to the cytoplasm. It carries out the reaction aldehydo-D-ribose 5-phosphate = D-ribulose 5-phosphate. Its pathway is carbohydrate degradation; pentose phosphate pathway; D-ribose 5-phosphate from D-ribulose 5-phosphate (non-oxidative stage): step 1/1. The protein is Ribose-5-phosphate isomerase (RKI1) of Candida glabrata (strain ATCC 2001 / BCRC 20586 / JCM 3761 / NBRC 0622 / NRRL Y-65 / CBS 138) (Yeast).